A 231-amino-acid polypeptide reads, in one-letter code: tRNA (guanine-N(1)-)-methyltransferase (231 aa).

S-adenosyl-L-methionine-binding positions include G109 and 133–138 (IGDYVL).

It belongs to the RNA methyltransferase TrmD family. As to quaternary structure, homodimer.

The protein resides in the cytoplasm. It catalyses the reaction guanosine(37) in tRNA + S-adenosyl-L-methionine = N(1)-methylguanosine(37) in tRNA + S-adenosyl-L-homocysteine + H(+). In terms of biological role, specifically methylates guanosine-37 in various tRNAs. This Nocardia farcinica (strain IFM 10152) protein is tRNA (guanine-N(1)-)-methyltransferase.